A 750-amino-acid chain; its full sequence is MTDVQSLDEGVYEATAVLDNGAFGTRTVRFETGRLAKQAAGSVVAYLDDDTMLLSATTASKQPKEHFDFFPLTVDVEERMYAAGRIPGSFFRREGRPSTDAILTCRLIDRPLRPSFVDGLRNEVQVVVTVMSLDPQDPYDVLAINGASASTQLSGLPFSGPVGGTRMALIDGQWVAFPTYEQLERAVFDMVVAGRIVGDDVAIMMVEAEATEKTAGLVSAGAQAPTEEVVAAGLEAAKPFIRTLCQAQQQLAQAAGKATEEFPVFPAYADDAFTAVEQAASAELAEALKIASKQERENRLDEIKAAVLEKVGTGEGEQFEGREKEVGAAFRSLTKKLVRQRIIRDQVRIDGRGLTDIRSLSAEVGVIPRAHGSALFERGETQILGVSTLNMLRLEQTIDSLSPETTKRYMHHYNFPPYSTGETGRVGSPKRREIGHGALAERALIPVLPTREEFPYALRQVSEALGSNGSTSMGSVCASTLSLLNAGVPLKAPVAGIAMGLVSDEIDGKTHYVALTDILGAEDAFGDMDFKVAGTKEFVTALQLDTKLDGIPSEVLAQALGQARDARFTILEVMAEAIGKPDEMSPHAPRVTSISIPVDKIGEVIGPKGKMINSITEETGAEITIEDDGTIYVGAADGPSAEAAIDKINAIANPQLPKVGERFLGTVVKTAAFGAFVSLLPGKDGLVHISKLGNGKRIGKVEDVVNVGDKLRVEIADIDSRGKISLVVVDDEAENADKGGESEETSEQGA.

The Mg(2+) site is built by aspartate 523 and aspartate 529. One can recognise a KH domain in the interval 589–648 (PRVTSISIPVDKIGEVIGPKGKMINSITEETGAEITIEDDGTIYVGAADGPSAEAAIDKI). One can recognise an S1 motif domain in the interval 660–729 (GERFLGTVVK…SRGKISLVVV (70 aa)).

This sequence belongs to the polyribonucleotide nucleotidyltransferase family. It depends on Mg(2+) as a cofactor.

Its subcellular location is the cytoplasm. It carries out the reaction RNA(n+1) + phosphate = RNA(n) + a ribonucleoside 5'-diphosphate. Involved in mRNA degradation. Catalyzes the phosphorolysis of single-stranded polyribonucleotides processively in the 3'- to 5'-direction. This is Polyribonucleotide nucleotidyltransferase from Saccharopolyspora erythraea (strain ATCC 11635 / DSM 40517 / JCM 4748 / NBRC 13426 / NCIMB 8594 / NRRL 2338).